Reading from the N-terminus, the 383-residue chain is MNDVIRDFFKMESAGGILLVIAAAIAMTIANSPLGETYQSVLHTYVFGMSVSHWINDGLMAVFFLLIGLEVKRELLEGALKSKETAIFPAIAAVGGMLAPALIYVAFNANDPEAISGWAIPAATDIAFALGIIALLGKRVPVSLKVFLLALAIIDDLGVVVIIALFYTGDLSTMALLVGFIMTGVLFMLNAKEVTKLTPYMIVGAILWFAVLKSGVHATLAGVVIGFAIPLKGKQGEHSPLKHMEHALHPYVAFGILPLFAFANAGISLEGVSMSGLTSMLPLGIALGLLVGKPLGIFTFSWAAVKMGVAKLPEGVNFKHIFAVSVLCGIGFTMSIFISSLAFGNVSPEFDTYARLGILMGSTTAALLGYALLHFSLPKKAQA.

Helical transmembrane passes span 14–34, 47–67, 87–107, 117–137, 146–166, 171–191, 205–225, 252–272, 280–300, 321–341, and 356–376; these read AGGILLVIAAAIAMTIANSPL, FGMSVSHWINDGLMAVFFLLI, IFPAIAAVGGMLAPALIYVAF, GWAIPAATDIAFALGIIALLG, VFLLALAIIDDLGVVVIIALF, LSTMALLVGFIMTGVLFMLNA, AILWFAVLKSGVHATLAGVVI, VAFGILPLFAFANAGISLEGV, MLPLGIALGLLVGKPLGIFTF, IFAVSVLCGIGFTMSIFISSL, and LGILMGSTTAALLGYALLHFS.

The protein belongs to the NhaA Na(+)/H(+) (TC 2.A.33) antiporter family.

Its subcellular location is the cell inner membrane. The catalysed reaction is Na(+)(in) + 2 H(+)(out) = Na(+)(out) + 2 H(+)(in). In terms of biological role, na(+)/H(+) antiporter that extrudes sodium in exchange for external protons. This chain is Na(+)/H(+) antiporter NhaA, found in Vibrio alginolyticus.